Reading from the N-terminus, the 104-residue chain is Large ribosomal subunit protein uL24 (104 aa).

This sequence belongs to the universal ribosomal protein uL24 family. In terms of assembly, part of the 50S ribosomal subunit.

In terms of biological role, one of two assembly initiator proteins, it binds directly to the 5'-end of the 23S rRNA, where it nucleates assembly of the 50S subunit. Its function is as follows. One of the proteins that surrounds the polypeptide exit tunnel on the outside of the subunit. The protein is Large ribosomal subunit protein uL24 of Shigella dysenteriae serotype 1 (strain Sd197).